A 199-amino-acid chain; its full sequence is MTTLTAQQIACVYAWLAQLFSRELDDEQLTQIASAQMAEWFSLLKSEPPLTAAVDELENRVATLTVRDDARLELAADFCGLFLMTDKQAALPYASAYKQDEQEIKRLLVEAGMETSGNFNEPTDHLAIYLELLSHLHFSLGEGTVPARRIDSLRQKTLTALRQWLPEFVARCHQYDSFGFYAALSQLLLVLVEGDHQNR.

This sequence belongs to the TorD/DmsD family. TorD subfamily.

It is found in the cytoplasm. Involved in the biogenesis of TorA. Acts on TorA before the insertion of the molybdenum cofactor and, as a result, probably favors a conformation of the apoenzyme that is competent for acquiring the cofactor. The polypeptide is Chaperone protein TorD (Escherichia coli O157:H7 (strain EC4115 / EHEC)).